A 127-amino-acid chain; its full sequence is Small ribosomal subunit protein eS8 (127 aa).

Positions 1-24 (MKWQGKSARKPTGGRLVPARGKRK) are disordered.

It belongs to the eukaryotic ribosomal protein eS8 family. In terms of assembly, part of the 30S ribosomal subunit.

The protein is Small ribosomal subunit protein eS8 of Methanothrix thermoacetophila (strain DSM 6194 / JCM 14653 / NBRC 101360 / PT) (Methanosaeta thermophila).